A 336-amino-acid chain; its full sequence is Zinc finger protein GFI1 homolog pag-3 (336 aa).

C2H2-type zinc fingers lie at residues 126 to 148 (FHCQ…QQVH), 154 to 176 (FECK…LLIH), 182 to 204 (YPCE…TYIH), 210 to 232 (HKCT…TRKH), and 238 to 260 (FACD…RESH). Residues 253 to 290 (RRRHRESHHPGHPEECVSASQISSDLSPKGYMTPPTSN) form a disordered region.

As to quaternary structure, may interact with transcription factor unc-3. In terms of tissue distribution, expressed in the BDU neurons, the touch neurons, the VA, VB and VC motor neurons, two AVF interneurons and unidentified neurons of the retrovesicular ganglion (at protein level).

Its subcellular location is the nucleus. It is found in the cell projection. It localises to the axon. The protein localises to the perikaryon. Transcription factor. Plays a role in the determination of neuroblast cell fate and neuronal differentiation. Negatively modulates expression of several components of dense-core vesicles (DCVs), thereby, in a DCV membrane protein ida-1-dependent manner, regulating neurosecretion. Negatively modulates the transcription of its own gene, the mechanosensory gene mec-3, and also other touch neuron-specific genes in the BDU neurons; required for coordinated movement. Required to determine the identity of BDU sensory neurons in concert with transcription factor unc-86, regulating expression of a number of genes, including transcription factors ceh-14 and ahr-1, neuropeptides flp-10, nlp-1 and nlp-15, and tyramine receptor-encoding ser-2. Acts in concert with non-canonical WNT signaling to negatively modulate transcription of mec-3 gene in BDU neurons. May act in concert with transcription factor unc-3 in motor neuron fate determination. May play a role programmed cell death. The polypeptide is Zinc finger protein GFI1 homolog pag-3 (Caenorhabditis elegans).